The chain runs to 991 residues: MRPAALLLLPSLLALLAHGLSSEAPITGEGHATGIRETDGELTAAPTPEQSDRGVHFVTTAPTLKLLNHHPLLEEFLQEGLEREEAPQPALPFQPDSPTHFTPSPLPRLTNQDNRPVFTSPTPAVAAAPTQPHSREKPWNLESKPPELSITSSLPPGPSMAVPTLLPEDRPSTTPPSQAWTPTQEGPGDMDRPWVPEVMSKTTGLGVEGTIATSTASGDDEETTTTIITTTVTTVQPPGPCSWNFSGPEGSLDSPTAPSSPSDVGLDCFYYISVYPGYGVEIKVENISLQEGETITVEGLGGPDPLPLANQSFLLRGQVIRSPTHQAALRFQSLPLPAGPGTFHFRYQAYLLSCHFPRRPAYGDVTVTSLHPGGSAHFHCATGYQLKGARFLTCLNATQPFWDSQEPVCIAACGGVIRNATTGRIVSPGFPGNYSNNLTCHWLLEAPESQRLHLHFEKVSLAEDDDRLIIRNGNNVEAPPVYDSYEVEYLPIEGLLSSGRHFFVEFSTDSSGAAAGMALRYEAFQQGHCYEPFVKYGNFSSSAPSYPVGTTVEFSCDPGYTLEQGSIIIECVDLHDPQWNETEPACRAVCSGEITDSAGVVLSPNWPEPYGRGQDCIWGVHVEEDKRIMLDIRVLRIGSGDVLTFYDGDDLTARVLGQYSGPRGHFKLFTSMADVTIQFQSDPGTSALGYQQGFVIHFFEVPRNDTCPELPEIPNGWKNPSQPELVHGTVVTYQCYPGYQVVGSSILMCQWDLSWSEDLPSCQRVTSCHDPGDVEHSRRLISSPKFPVGATVQYVCDQGFVLTGSAILTCHDRQAGSPKWSDRAPKCLLEQFKPCHGLSAPENGARSPEKRLHPAGATIHFSCAPGYVLKGQASIKCVPGHPSHWSDPPPICRAASLDGFYNGRSLDVAKAPAASSALDAAHLAAAIFLPLVAMVLLVGGVYLYFSRFQGKSPLQLPRTHPRPYNRITVESAFDNPTYETGSLSFAGDERI.

Residues 1-19 form the signal peptide; sequence MRPAALLLLPSLLALLAHG. Over 20–922 the chain is Extracellular; it reads LSSEAPITGE…AASSALDAAH (903 aa). A disordered region spans residues 79–193; that stretch reads EGLEREEAPQ…QEGPGDMDRP (115 aa). The span at 119–132 shows a compositional bias: low complexity; it reads TSPTPAVAAAPTQP. The span at 175–184 shows a compositional bias: polar residues; the sequence is PPSQAWTPTQ. Cys241 and Cys268 are disulfide-bonded. A CUB 1 domain is found at 241-353; it reads CSWNFSGPEG…HFRYQAYLLS (113 aa). The N-linked (GlcNAc...) asparagine glycan is linked to Asn286. The 60-residue stretch at 352 to 411 folds into the Sushi 1 domain; sequence LSCHFPRRPAYGDVTVTSLHPGGSAHFHCATGYQLKGARFLTCLNATQPFWDSQEPVCIA. Cystine bridges form between Cys354-Cys394, Cys380-Cys409, Cys413-Cys440, Cys529-Cys571, Cys556-Cys586, Cys590-Cys616, Cys707-Cys749, Cys735-Cys762, Cys768-Cys810, Cys796-Cys827, Cys835-Cys877, and Cys863-Cys892. 3 N-linked (GlcNAc...) asparagine glycosylation sites follow: Asn396, Asn433, and Asn538. Residues 413 to 524 form the CUB 2 domain; that stretch reads CGGVIRNATT…AGMALRYEAF (112 aa). The region spanning 527-588 is the Sushi 2 domain; that stretch reads GHCYEPFVKY…WNETEPACRA (62 aa). Residues 590-701 form the CUB 3 domain; sequence CSGEITDSAG…QGFVIHFFEV (112 aa). Sushi domains lie at 705–764, 766–829, and 833–894; these read DTCP…SCQR, TSCH…KCLL, and KPCH…ICRA. The helical transmembrane segment at 923 to 943 threads the bilayer; sequence LAAAIFLPLVAMVLLVGGVYL. The Cytoplasmic portion of the chain corresponds to 944 to 991; sequence YFSRFQGKSPLQLPRTHPRPYNRITVESAFDNPTYETGSLSFAGDERI.

This sequence belongs to the SEZ6 family. Glycosylated. Brain-specific. Expressed in extrasynaptic and synaptic subcellular fractions (at protein level). Expression correlates with the most active periods of cortical neurogenesis and neuronal maturation. Expression is restricted to the gray matter with higher levels in the forebrain including the olfactory bulb, anterior olfactory nuclei, olfactory tubercle, striatum, hippocampal CA1 pyramidal cell layer and cerebral cortex. Expression is up-regulated with the convulsant drug, pentylenetetrazole.

Its subcellular location is the cell membrane. The protein resides in the cell projection. The protein localises to the dendrite. It localises to the synapse. It is found in the secreted. Its subcellular location is the cytoplasm. In terms of biological role, may play a role in cell-cell recognition and in neuronal membrane signaling. Seems to be important for the achievement of the necessary balance between dendrite elongation and branching during the elaboration of a complex dendritic arbor. Involved in the development of appropriate excitatory synaptic connectivity. The protein is Seizure protein 6 (Sez6) of Mus musculus (Mouse).